The chain runs to 207 residues: MRHRILTLLLGLAVLVTAGCGFNLRGTTQVPTELQKLLLESSDPYGPLARSIRQQLRLNNVTIVDDAMRKDIPTLRIIGSSESQETVSIFRNGVAAENQLVLHVQAQVLIPGHDIYPLQVNVFRTFFDNPLTALAKEAEAEVLRQEMREQAAQQLVRQLLTVHAAEVKNTQKNGDKPVSDANAAQGSTPTAVNETTLGEPAVSTSAK.

Residues 1–19 form the signal peptide; it reads MRHRILTLLLGLAVLVTAG. Cysteine 20 carries N-palmitoyl cysteine lipidation. Cysteine 20 is lipidated: S-diacylglycerol cysteine. The disordered stretch occupies residues 168-207; it reads KNTQKNGDKPVSDANAAQGSTPTAVNETTLGEPAVSTSAK. Positions 182–207 are enriched in polar residues; the sequence is NAAQGSTPTAVNETTLGEPAVSTSAK.

Belongs to the LptE lipoprotein family. In terms of assembly, component of the lipopolysaccharide transport and assembly complex. Interacts with LptD.

It localises to the cell outer membrane. Functionally, together with LptD, is involved in the assembly of lipopolysaccharide (LPS) at the surface of the outer membrane. Required for the proper assembly of LptD. Binds LPS and may serve as the LPS recognition site at the outer membrane. In Yersinia pseudotuberculosis serotype O:1b (strain IP 31758), this protein is LPS-assembly lipoprotein LptE.